Here is a 174-residue protein sequence, read N- to C-terminus: Crossover junction endodeoxyribonuclease RuvC (174 aa).

Residues Asp-16, Glu-76, and Asp-148 contribute to the active site. Residues Asp-16, Glu-76, and Asp-148 each coordinate Mg(2+).

The protein belongs to the RuvC family. Homodimer which binds Holliday junction (HJ) DNA. The HJ becomes 2-fold symmetrical on binding to RuvC with unstacked arms; it has a different conformation from HJ DNA in complex with RuvA. In the full resolvosome a probable DNA-RuvA(4)-RuvB(12)-RuvC(2) complex forms which resolves the HJ. The cofactor is Mg(2+).

The protein localises to the cytoplasm. It carries out the reaction Endonucleolytic cleavage at a junction such as a reciprocal single-stranded crossover between two homologous DNA duplexes (Holliday junction).. Its function is as follows. The RuvA-RuvB-RuvC complex processes Holliday junction (HJ) DNA during genetic recombination and DNA repair. Endonuclease that resolves HJ intermediates. Cleaves cruciform DNA by making single-stranded nicks across the HJ at symmetrical positions within the homologous arms, yielding a 5'-phosphate and a 3'-hydroxyl group; requires a central core of homology in the junction. The consensus cleavage sequence is 5'-(A/T)TT(C/G)-3'. Cleavage occurs on the 3'-side of the TT dinucleotide at the point of strand exchange. HJ branch migration catalyzed by RuvA-RuvB allows RuvC to scan DNA until it finds its consensus sequence, where it cleaves and resolves the cruciform DNA. In Rhodopseudomonas palustris (strain ATCC BAA-98 / CGA009), this protein is Crossover junction endodeoxyribonuclease RuvC.